The chain runs to 153 residues: Cyanate hydratase (153 aa).

Residues R88, E91, and S114 contribute to the active site.

Belongs to the cyanase family.

The catalysed reaction is cyanate + hydrogencarbonate + 3 H(+) = NH4(+) + 2 CO2. Functionally, catalyzes the reaction of cyanate with bicarbonate to produce ammonia and carbon dioxide. The chain is Cyanate hydratase from Mycolicibacterium vanbaalenii (strain DSM 7251 / JCM 13017 / BCRC 16820 / KCTC 9966 / NRRL B-24157 / PYR-1) (Mycobacterium vanbaalenii).